The sequence spans 241 residues: tRNA (guanine-N(1)-)-methyltransferase (241 aa).

Residues G108 and 127–132 (LGDYVL) contribute to the S-adenosyl-L-methionine site.

This sequence belongs to the RNA methyltransferase TrmD family. Homodimer.

It localises to the cytoplasm. The enzyme catalyses guanosine(37) in tRNA + S-adenosyl-L-methionine = N(1)-methylguanosine(37) in tRNA + S-adenosyl-L-homocysteine + H(+). Its function is as follows. Specifically methylates guanosine-37 in various tRNAs. The polypeptide is tRNA (guanine-N(1)-)-methyltransferase (Streptococcus suis (strain 98HAH33)).